Consider the following 335-residue polypeptide: Glycerol-3-phosphate dehydrogenase [NAD(P)+] (335 aa).

4 residues coordinate NADPH: Ser-10, Phe-11, Arg-31, and Lys-105. Residues Lys-105, Gly-136, and Ser-138 each contribute to the sn-glycerol 3-phosphate site. Ala-140 is an NADPH binding site. Sn-glycerol 3-phosphate-binding residues include Lys-191, Asp-244, Ser-254, Arg-255, and Asn-256. The Proton acceptor role is filled by Lys-191. Position 255 (Arg-255) interacts with NADPH. 2 residues coordinate NADPH: Val-279 and Glu-281.

It belongs to the NAD-dependent glycerol-3-phosphate dehydrogenase family.

Its subcellular location is the cytoplasm. It carries out the reaction sn-glycerol 3-phosphate + NAD(+) = dihydroxyacetone phosphate + NADH + H(+). The catalysed reaction is sn-glycerol 3-phosphate + NADP(+) = dihydroxyacetone phosphate + NADPH + H(+). It functions in the pathway membrane lipid metabolism; glycerophospholipid metabolism. In terms of biological role, catalyzes the reduction of the glycolytic intermediate dihydroxyacetone phosphate (DHAP) to sn-glycerol 3-phosphate (G3P), the key precursor for phospholipid synthesis. The chain is Glycerol-3-phosphate dehydrogenase [NAD(P)+] from Leptospira borgpetersenii serovar Hardjo-bovis (strain L550).